The sequence spans 1430 residues: DNA-directed RNA polymerase subunit beta' (1430 aa).

Zn(2+)-binding residues include Cys-70, Cys-72, Cys-85, and Cys-88. Mg(2+) contacts are provided by Asp-495, Asp-497, and Asp-499. Cys-838, Cys-912, Cys-919, and Cys-922 together coordinate Zn(2+).

Belongs to the RNA polymerase beta' chain family. The RNAP catalytic core consists of 2 alpha, 1 beta, 1 beta' and 1 omega subunit. When a sigma factor is associated with the core the holoenzyme is formed, which can initiate transcription. Mg(2+) serves as cofactor. It depends on Zn(2+) as a cofactor.

The enzyme catalyses RNA(n) + a ribonucleoside 5'-triphosphate = RNA(n+1) + diphosphate. In terms of biological role, DNA-dependent RNA polymerase catalyzes the transcription of DNA into RNA using the four ribonucleoside triphosphates as substrates. The protein is DNA-directed RNA polymerase subunit beta' of Rhodospirillum centenum (strain ATCC 51521 / SW).